Reading from the N-terminus, the 68-residue chain is Large ribosomal subunit protein bL32 (68 aa).

A disordered region spans residues M1–G25.

This sequence belongs to the bacterial ribosomal protein bL32 family.

The polypeptide is Large ribosomal subunit protein bL32 (Dinoroseobacter shibae (strain DSM 16493 / NCIMB 14021 / DFL 12)).